The sequence spans 74 residues: Exodeoxyribonuclease 7 small subunit (74 aa).

This sequence belongs to the XseB family. As to quaternary structure, heterooligomer composed of large and small subunits.

It localises to the cytoplasm. It catalyses the reaction Exonucleolytic cleavage in either 5'- to 3'- or 3'- to 5'-direction to yield nucleoside 5'-phosphates.. In terms of biological role, bidirectionally degrades single-stranded DNA into large acid-insoluble oligonucleotides, which are then degraded further into small acid-soluble oligonucleotides. This is Exodeoxyribonuclease 7 small subunit from Thermotoga neapolitana (strain ATCC 49049 / DSM 4359 / NBRC 107923 / NS-E).